We begin with the raw amino-acid sequence, 341 residues long: tRNA N6-adenosine threonylcarbamoyltransferase (341 aa).

Fe cation contacts are provided by His-111 and His-115. Substrate is bound by residues 134-138 (LVSGG), Asp-167, Gly-180, and Asn-272. Residue Asp-300 participates in Fe cation binding.

Belongs to the KAE1 / TsaD family. Requires Fe(2+) as cofactor.

It localises to the cytoplasm. The catalysed reaction is L-threonylcarbamoyladenylate + adenosine(37) in tRNA = N(6)-L-threonylcarbamoyladenosine(37) in tRNA + AMP + H(+). In terms of biological role, required for the formation of a threonylcarbamoyl group on adenosine at position 37 (t(6)A37) in tRNAs that read codons beginning with adenine. Is involved in the transfer of the threonylcarbamoyl moiety of threonylcarbamoyl-AMP (TC-AMP) to the N6 group of A37, together with TsaE and TsaB. TsaD likely plays a direct catalytic role in this reaction. This is tRNA N6-adenosine threonylcarbamoyltransferase from Edwardsiella ictaluri (strain 93-146).